Here is a 1115-residue protein sequence, read N- to C-terminus: PAN2-PAN3 deadenylation complex catalytic subunit PAN2 (1115 aa).

WD repeat units follow at residues 27–66 (NRDKEITAISFDEKANLIWSGDSYGCISSYDPTFQLYTRY), 112–153 (AAFS…GCLD), 155–194 (LLNYSSKVKLMCSNNKVLSIGRQTGTVDLLDPTSNRTIKS), 197–236 (AHSASISAMDLRDNTLVTVGKSKRFYNLYADPFVNVYDLR), and 295–334 (HPCQSIKKLCLSPNGDVLGILEADNHLDTWRRSSNNMGMF). The segment at 337–473 (TPEMLAYPDY…IQTYTSINKY (137 aa)) is linker. The USP domain occupies 474–855 (EVPPAYSRLP…TPEIIIYCDA (382 aa)). Zn(2+) is bound by residues cysteine 660, histidine 662, cysteine 713, and cysteine 716. The Exonuclease domain occupies 907 to 1079 (VAIDAEFVSL…EDAHTALILY (173 aa)). Positions 910, 912, 1020, and 1071 each coordinate a divalent metal cation.

Belongs to the peptidase C19 family. PAN2 subfamily. Forms a heterotrimer with an asymmetric homodimer of the regulatory subunit PAN3 to form the poly(A)-nuclease (PAN) deadenylation complex. Requires a divalent metal cation as cofactor.

The protein localises to the cytoplasm. The catalysed reaction is Exonucleolytic cleavage of poly(A) to 5'-AMP.. Positively regulated by the regulatory subunit PAN3. Negatively regulated by PAB1-binding protein PBP1. Inhibited under stress conditions. Inhibition of deadenylation under stress increases mRNA stability, which may be a mechanism to retain the majority of the cytoplasmic pool of mRNAs for later reuse and recovery from stress. Catalytic subunit of the poly(A)-nuclease (PAN) deadenylation complex, one of two cytoplasmic mRNA deadenylases involved in mRNA turnover. PAN specifically shortens poly(A) tails of RNA and the activity is stimulated by poly(A)-binding protein PAB1. PAN deadenylation is followed by rapid degradation of the shortened mRNA tails by the CCR4-NOT complex. Deadenylated mRNAs are then degraded by two alternative mechanisms, namely exosome-mediated 3'-5' exonucleolytic degradation, or deadenylation-dependent mRNA decaping by DCP1-DCP2 and subsequent 5'-3' exonucleolytic degradation by XRN1. May also be involved in post-transcriptional maturation of mRNA poly(A) tails, trimming the tails from their synthesized length to the slightly shorter, apparently messenger-specific length found on newly exported mRNAs. PAN cooperates with protein kinase DUN1 in the regulation of RAD5 mRNA levels and cell survival in response to replicational stress. The protein is PAN2-PAN3 deadenylation complex catalytic subunit PAN2 of Saccharomyces cerevisiae (strain ATCC 204508 / S288c) (Baker's yeast).